We begin with the raw amino-acid sequence, 990 residues long: Presequence protease, mitochondrial (990 aa).

The N-terminal 56 residues, 1–56, are a transit peptide targeting the mitochondrion; the sequence is MLRFQRTVPRVAIRRLANVYSEGAVLHGYKVRRAQEIPEMRMAAVELEHEMTGARH. His84 serves as a coordination point for Zn(2+). Catalysis depends on Glu87, which acts as the Proton acceptor. A Zn(2+)-binding site is contributed by His88. The active site involves Glu160. Glu185 contacts Zn(2+).

This sequence belongs to the peptidase M16 family. PreP subfamily. Monomer and homodimer; homodimerization is induced by binding of the substrate. The cofactor is Zn(2+).

The protein localises to the mitochondrion intermembrane space. Its subcellular location is the mitochondrion matrix. Functionally, degrades mitochondrial transit peptides after their cleavage in the intermembrane space or in the matrix, and presequence peptides; clearance of these peptides is required to keep the presequence processing machinery running. Preferentially cleaves the N-terminal side of paired basic amino acid residues. Also degrades other unstructured peptides. May function as an ATP-dependent peptidase as opposed to a metalloendopeptidase. The polypeptide is Presequence protease, mitochondrial (CYM1) (Eremothecium gossypii (strain ATCC 10895 / CBS 109.51 / FGSC 9923 / NRRL Y-1056) (Yeast)).